The chain runs to 414 residues: Esterase FrsA (414 aa).

Belongs to the FrsA family.

The catalysed reaction is a carboxylic ester + H2O = an alcohol + a carboxylate + H(+). In terms of biological role, catalyzes the hydrolysis of esters. The protein is Esterase FrsA of Shigella sonnei (strain Ss046).